We begin with the raw amino-acid sequence, 265 residues long: Beta-lactamase SHV-4 (265 aa).

Catalysis depends on Ser45, which acts as the Acyl-ester intermediate. Cys52 and Cys98 form a disulfide bridge. Glu143 (proton acceptor) is an active-site residue. 209 to 211 serves as a coordination point for substrate; it reads KTG.

The protein belongs to the class-A beta-lactamase family.

The enzyme catalyses a beta-lactam + H2O = a substituted beta-amino acid. Its function is as follows. SHV enzymes hydrolyze broad spectrum cephalosporins notably cefotaxime and ceftazidime. SHV-4 causes particularly high levels of resistance to aztreonam and ceftazidime. The sequence is that of Beta-lactamase SHV-4 (bla) from Klebsiella pneumoniae.